We begin with the raw amino-acid sequence, 284 residues long: 4-diphosphocytidyl-2-C-methyl-D-erythritol kinase (284 aa).

Residue lysine 10 is part of the active site. ATP is bound at residue proline 92 to serine 102. Aspartate 134 is a catalytic residue.

This sequence belongs to the GHMP kinase family. IspE subfamily.

The catalysed reaction is 4-CDP-2-C-methyl-D-erythritol + ATP = 4-CDP-2-C-methyl-D-erythritol 2-phosphate + ADP + H(+). It participates in isoprenoid biosynthesis; isopentenyl diphosphate biosynthesis via DXP pathway; isopentenyl diphosphate from 1-deoxy-D-xylulose 5-phosphate: step 3/6. Its function is as follows. Catalyzes the phosphorylation of the position 2 hydroxy group of 4-diphosphocytidyl-2C-methyl-D-erythritol. The sequence is that of 4-diphosphocytidyl-2-C-methyl-D-erythritol kinase from Salinibacter ruber (strain DSM 13855 / M31).